A 209-amino-acid polypeptide reads, in one-letter code: MKGVTVVDHPLVQHKLTIMRKKETSTAGFRRLLREISLLLGYEVTRNLELTTTTIETPIETMEAPTLEGKKLVFASVLRAGNGLLEGLLDLVPAARVAHIGLYRDHETLEAVEYFFKAPSDLADRLVIVVDPMLATANSAIAAIDKLKGRGATNIRFLCLLAAPEGIERFTKAHPDVPVFTASIDRQLNEKGYIMPGLGDAGDRMYGTK.

5-phospho-alpha-D-ribose 1-diphosphate-binding positions include R79, R104, and 131–139 (DPMLATANS). Residues I194 and 199 to 201 (GDA) each bind uracil. D200 serves as a coordination point for 5-phospho-alpha-D-ribose 1-diphosphate.

This sequence belongs to the UPRTase family. It depends on Mg(2+) as a cofactor.

The enzyme catalyses UMP + diphosphate = 5-phospho-alpha-D-ribose 1-diphosphate + uracil. The protein operates within pyrimidine metabolism; UMP biosynthesis via salvage pathway; UMP from uracil: step 1/1. Allosterically activated by GTP. Its function is as follows. Catalyzes the conversion of uracil and 5-phospho-alpha-D-ribose 1-diphosphate (PRPP) to UMP and diphosphate. This is Uracil phosphoribosyltransferase from Mesorhizobium japonicum (strain LMG 29417 / CECT 9101 / MAFF 303099) (Mesorhizobium loti (strain MAFF 303099)).